Reading from the N-terminus, the 292-residue chain is UPF0696 protein C11orf68 homolog (292 aa).

Positions 1–10 (MAAAAAAVAG) are enriched in low complexity. The disordered stretch occupies residues 1–60 (MAAAAAAVAGAGRGGGGGAEPRQERSRARGWAGAERSEGRRMEPGEELEEEDSPGGREDG). A compositionally biased stretch (basic and acidic residues) spans 35–44 (ERSEGRRMEP).

The protein belongs to the UPF0696 family.

The chain is UPF0696 protein C11orf68 homolog from Bos taurus (Bovine).